The sequence spans 156 residues: ATP synthase subunit b (156 aa).

Residues 7–27 (LFAQIIVFFGLVWFTMKFVWP) form a helical membrane-spanning segment.

Belongs to the ATPase B chain family. As to quaternary structure, F-type ATPases have 2 components, F(1) - the catalytic core - and F(0) - the membrane proton channel. F(1) has five subunits: alpha(3), beta(3), gamma(1), delta(1), epsilon(1). F(0) has three main subunits: a(1), b(2) and c(10-14). The alpha and beta chains form an alternating ring which encloses part of the gamma chain. F(1) is attached to F(0) by a central stalk formed by the gamma and epsilon chains, while a peripheral stalk is formed by the delta and b chains.

It is found in the cell inner membrane. Its function is as follows. F(1)F(0) ATP synthase produces ATP from ADP in the presence of a proton or sodium gradient. F-type ATPases consist of two structural domains, F(1) containing the extramembraneous catalytic core and F(0) containing the membrane proton channel, linked together by a central stalk and a peripheral stalk. During catalysis, ATP synthesis in the catalytic domain of F(1) is coupled via a rotary mechanism of the central stalk subunits to proton translocation. Component of the F(0) channel, it forms part of the peripheral stalk, linking F(1) to F(0). The polypeptide is ATP synthase subunit b (Neisseria meningitidis serogroup C (strain 053442)).